The primary structure comprises 258 residues: Putative ankyrin repeat domain-containing protein 30B-like (258 aa).

The tract at residues 1 to 21 (MERLSAAPVKGQTGPERPSPF) is disordered. ANK repeat units follow at residues 71 to 100 (KKRT…QLDV), 104 to 133 (ENRT…DPNI), 137 to 166 (YGNT…DIEV), and 170 to 199 (AGHT…NANA). Residues 216 to 258 (KISKNSQNSNPEGTSEGTPDEAAPLAERTPDTAESLVERTPDE) form a disordered region. Residues 218–232 (SKNSQNSNPEGTSEG) are compositionally biased toward polar residues. Over residues 243–258 (RTPDTAESLVERTPDE) the composition is skewed to basic and acidic residues.

In Homo sapiens (Human), this protein is Putative ankyrin repeat domain-containing protein 30B-like (ANKRD30BL).